The primary structure comprises 477 residues: P3 protein (477 aa).

A disordered region spans residues 1–21 (MVFRSGEGHSLQWPGPEGGTG). A run of 8 helical transmembrane segments spans residues 225 to 245 (PMLL…FLMA), 253 to 273 (ALAL…SYLF), 281 to 301 (VTLA…FLPL), 320 to 340 (VSKI…GVVI), 361 to 381 (VLLL…LAGV), 383 to 403 (LPIV…GYGL), 417 to 437 (VSIE…QLSL), and 450 to 470 (FLVA…HFIY).

This sequence belongs to the bile acid:sodium symporter (BASS) (TC 2.A.28) family.

The protein localises to the membrane. In terms of biological role, the ubiquitous expression and the conservation of the sequence in distant animal species suggest that the gene codes for a protein with housekeeping functions. In Bos taurus (Bovine), this protein is P3 protein (SLC10A3).